The chain runs to 521 residues: FAD-dependent monooxygenase mdpD (521 aa).

Residues 1–48 form a disordered region; sequence MTHFPVNIASDKQEFDPERWAKTPTTESSVNGENGTAPTSGLPSRHPS. Over residues 11–21 the composition is skewed to basic and acidic residues; it reads DKQEFDPERWA. The span at 23–48 shows a compositional bias: polar residues; sequence TPTTESSVNGENGTAPTSGLPSRHPS. 2 residues coordinate FAD: Val94 and Arg160. Active-site residues include Arg244 and Tyr271. Residues Asp369 and Gly382 each contribute to the FAD site.

The protein belongs to the paxM FAD-dependent monooxygenase family. The cofactor is FAD.

It participates in secondary metabolite biosynthesis. Functionally, FAD-dependent monooxygenase; part of the gene cluster that mediates the biosynthesis of monodictyphenone, a prenyl xanthone derivative. The pathway begins with the synthesis of atrochrysone thioester by the polyketide synthase (PKS) mdpG. The atrochrysone carboxyl ACP thioesterase mdpF then breaks the thioester bond and releases the atrochrysone carboxylic acid from mdpG. The atrochrysone carboxylic acid is then converted to atrochrysone which is further transformed into emodin anthrone. The next step is performed by the anthrone oxygenase mdpH that catalyzes the oxidation of emodinanthrone to emodin. Emodin is further modified to yield monodictyphenone via several steps involving mdpB, mdpC mdpJ, mdpK and mdpL. These enzymes with xptA, xptB and xptC are also proposed to be involved in the synthesis of shamixanthone from emodin. Especially, direct reduction of emodin by the short chain dehydrogenase mdpC followed by dehydration catalyzed by the scytalone dehydratase-like protein mdpB gives loss of oxygen and formation of chrysophanol intermediate in two simple steps. The chain is FAD-dependent monooxygenase mdpD from Emericella nidulans (strain FGSC A4 / ATCC 38163 / CBS 112.46 / NRRL 194 / M139) (Aspergillus nidulans).